A 120-amino-acid polypeptide reads, in one-letter code: Ribonuclease P protein component (120 aa).

The protein belongs to the RnpA family. Consists of a catalytic RNA component (M1 or rnpB) and a protein subunit.

It carries out the reaction Endonucleolytic cleavage of RNA, removing 5'-extranucleotides from tRNA precursor.. Functionally, RNaseP catalyzes the removal of the 5'-leader sequence from pre-tRNA to produce the mature 5'-terminus. It can also cleave other RNA substrates such as 4.5S RNA. The protein component plays an auxiliary but essential role in vivo by binding to the 5'-leader sequence and broadening the substrate specificity of the ribozyme. This Chlamydia trachomatis serovar D (strain ATCC VR-885 / DSM 19411 / UW-3/Cx) protein is Ribonuclease P protein component.